Consider the following 91-residue polypeptide: MALSLFTVGQLIFLFWTMRITEANPDPAAKAVPAAAAPDTASDAAAAAAATAATAAAAAAATAVTAAKAAALTAANAAAAAAATAAAAARG.

The N-terminal stretch at 1 to 21 (MALSLFTVGQLIFLFWTMRIT) is a signal peptide. Positions 22-39 (EANPDPAAKAVPAAAAPD) are cleaved as a propeptide — removed by a dipeptidylpeptidase.

It belongs to the type-I AFP family.

It localises to the secreted. Contributes to protect fish blood from freezing at subzero sea water temperatures. Lowers the blood freezing point. Binds to nascent ice crystals and prevents further growth. The sequence is that of Ice-structuring protein from Pseudopleuronectes americanus (Winter flounder).